Consider the following 702-residue polypeptide: Methionine--tRNA ligase (702 aa).

A 'HIGH' region motif is present at residues 14–24 (PYANGPVHLGH). Cys146, Cys149, Cys159, and Cys162 together coordinate Zn(2+). The 'KMSKS' region motif lies at 344 to 348 (KFSKS). Position 347 (Lys347) interacts with ATP. In terms of domain architecture, tRNA-binding spans 601–702 (EFLKVDLRVA…GKEINGKKIQ (102 aa)).

The protein belongs to the class-I aminoacyl-tRNA synthetase family. MetG type 1 subfamily. Homodimer. Zn(2+) serves as cofactor.

The protein localises to the cytoplasm. It catalyses the reaction tRNA(Met) + L-methionine + ATP = L-methionyl-tRNA(Met) + AMP + diphosphate. Functionally, is required not only for elongation of protein synthesis but also for the initiation of all mRNA translation through initiator tRNA(fMet) aminoacylation. This chain is Methionine--tRNA ligase, found in Chlorobium phaeobacteroides (strain DSM 266 / SMG 266 / 2430).